Reading from the N-terminus, the 324-residue chain is MRIIFAGTPDFAARALEELQKAGLDIVLTLTQPDRPAGRGMKMQASPVKILAQQYDIPLLQPETLKSSDIQAQLATFKPDVMIVAAYGLLLPEAVLRIPRHGCINIHASLLPRWRGAAPIQRALLEGDTETGISIMQMNQGLDTGAVLLKRSLPIEPYDTTATLHDKLADLGGKCIVEALTLLDQGRLISEPQNEVDACYAAKIRKIEAEIDWTCDAAYIDRMIRTFDPHPGAFTHLQGNTIKLWQARIVSHVNHNSSHQAGKIITVDPDGIVVACGRDALSIDILQKAGGKKLTAAQFLAGHPLHPGESFHKATQDNQGASET.

109 to 112 serves as a coordination point for (6S)-5,6,7,8-tetrahydrofolate; that stretch reads SLLP. Residues 305-324 form a disordered region; it reads LHPGESFHKATQDNQGASET.

It belongs to the Fmt family.

It catalyses the reaction L-methionyl-tRNA(fMet) + (6R)-10-formyltetrahydrofolate = N-formyl-L-methionyl-tRNA(fMet) + (6S)-5,6,7,8-tetrahydrofolate + H(+). Its function is as follows. Attaches a formyl group to the free amino group of methionyl-tRNA(fMet). The formyl group appears to play a dual role in the initiator identity of N-formylmethionyl-tRNA by promoting its recognition by IF2 and preventing the misappropriation of this tRNA by the elongation apparatus. The polypeptide is Methionyl-tRNA formyltransferase (Nitrosomonas europaea (strain ATCC 19718 / CIP 103999 / KCTC 2705 / NBRC 14298)).